The chain runs to 587 residues: Bifunctional lycopene cyclase/phytoene synthase (587 aa).

Residues M1 to K242 form a lycopene beta-cyclase region. 7 consecutive transmembrane segments (helical) span residues V8–F28, R35–I55, A77–L97, G120–A140, L150–L170, A172–V192, and I220–F240. The phytoene synthase stretch occupies residues A249–A587.

In the N-terminal section; belongs to the lycopene beta-cyclase family. The protein in the C-terminal section; belongs to the phytoene/squalene synthase family.

The protein localises to the membrane. It catalyses the reaction all-trans-lycopene = gamma-carotene. It carries out the reaction gamma-carotene = all-trans-beta-carotene. The catalysed reaction is 2 (2E,6E,10E)-geranylgeranyl diphosphate = 15-cis-phytoene + 2 diphosphate. It participates in carotenoid biosynthesis; beta-carotene biosynthesis. Its pathway is carotenoid biosynthesis; phytoene biosynthesis; all-trans-phytoene from geranylgeranyl diphosphate: step 1/1. Its function is as follows. Bifunctional enzyme that catalyzes the reactions from geranylgeranyl diphosphate to phytoene (phytoene synthase) and lycopene to beta-carotene via the intermediate gamma-carotene (lycopene cyclase). This chain is Bifunctional lycopene cyclase/phytoene synthase, found in Colletotrichum graminicola (strain M1.001 / M2 / FGSC 10212) (Maize anthracnose fungus).